The sequence spans 483 residues: L-2-hydroxyglutarate dehydrogenase, mitochondrial (483 aa).

The N-terminal 67 residues, 1-67 (MKHKPETAAF…VDASKTIVRG (67 aa)), are a transit peptide targeting the mitochondrion.

Belongs to the L2HGDH family. Requires FAD as cofactor.

It is found in the mitochondrion. It catalyses the reaction (S)-2-hydroxyglutarate + A = 2-oxoglutarate + AH2. In terms of biological role, catalyzes the oxidation of (S)-2-hydroxyglutarate to 2-oxoglutarate. Is specific for the (S) enantiomer and possesses very poor activity toward (R)-2-hydroxyglutarate. Has no activity toward related 2-hydroxy acids, such as glycolate, L-lactate or D-lactate. The polypeptide is L-2-hydroxyglutarate dehydrogenase, mitochondrial (Arabidopsis thaliana (Mouse-ear cress)).